The primary structure comprises 275 residues: Voltage-dependent calcium channel gamma-5 subunit (275 aa).

Transmembrane regions (helical) follow at residues 8-28 (ALTL…GIAV), 103-123 (FPLV…IGHI), 129-149 (ILAF…VVGL), and 176-196 (GWSF…GVMS).

The protein belongs to the PMP-22/EMP/MP20 family. CACNG subfamily. As to quaternary structure, the L-type calcium channel is composed of five subunits: alpha-1, alpha-2/delta, beta and gamma. Acts as an auxiliary subunit for AMPA-selective glutamate receptors (AMPARs). Found in a complex with GRIA1, GRIA2, GRIA3, GRIA4, CNIH2, CNIH3, CACNG2, CACNG3, CACNG4, CACNG7 and CACNG8. Interacts with GRIA1, GRIA2, GRIA3 and GRIA4.

It localises to the membrane. It is found in the postsynaptic density membrane. In terms of biological role, regulates the gating properties of AMPA-selective glutamate receptors (AMPARs). Modulates their gating properties by accelerating their rates of activation, deactivation and desensitization. Displays subunit-specific AMPA receptor regulation. Shows specificity for GRIA1, GRIA4 and the long isoform of GRIA2. Thought to stabilize the calcium channel in an inactivated (closed) state. In Homo sapiens (Human), this protein is Voltage-dependent calcium channel gamma-5 subunit (CACNG5).